Here is a 674-residue protein sequence, read N- to C-terminus: MPRLRVYELAKKLNMSTKDLLQELEELGLNVKNHMSYIDEETVGLLLEIFEEEEETAAKAKAAKPKKEKEELEEIFQEVVLKPEDLQLNTLAVKIGVPLNRIIQDMFVKGIVLKPTQQIDEKTAKDIAKIYGYRAKFYQPEEEISELETIENELERLEKYFETLYETHKDELSIRPPVVTVMGHVDHGKTTLLDKIRRTRVAEKEVGGITQSIGAYQVVHKGKKITFIDTPGHELFTEMRAKGAQATDIVVLVVAADDGVMPQTIEAYNHAKVANVPVIVAINKIDKPNANIEATKRQLVDKLNIIPEDWGGDTITVPISARTGHGIDELLEMILLVAELREIKCYPKGPARCVIIESKLDRSLGPVANVIVKDGELRVGDYLVAGPTYCKVRILIDDKGKSIKIAEPSQPVMIVGFEEVPDIRYSIYAVESLESARTVTQQLKERLERDKMAKRRVRLEELLKMMEESEKKELNLVLKADTFGSLSAVQNAIASLKSEEIKINIVHSGVGTVNNSDVMLASASNGIIVGFRVKVDAQARKTAENEGIQIKTYEIIYDLLDNMKLALEGMLKPETVEELVGRGEIRKIFDIKKVGKIAGVQLLEGHVSKDCIVKVYRNGTFLFSDQIDSLKHYKEDVDKVSAPQECGLKLKSNEDLRENDELEFYEQHQVQKKL.

The region spanning 174-344 (IRPPVVTVMG…LLVAELREIK (171 aa)) is the tr-type G domain. Residues 183–190 (GHVDHGKT) form a G1 region. Residue 183-190 (GHVDHGKT) participates in GTP binding. Residues 208–212 (GITQS) form a G2 region. Residues 229–232 (DTPG) are G3. Residues 229–233 (DTPGH) and 283–286 (NKID) contribute to the GTP site. Residues 283–286 (NKID) are G4. The G5 stretch occupies residues 320 to 322 (SAR).

It belongs to the TRAFAC class translation factor GTPase superfamily. Classic translation factor GTPase family. IF-2 subfamily.

It is found in the cytoplasm. One of the essential components for the initiation of protein synthesis. Protects formylmethionyl-tRNA from spontaneous hydrolysis and promotes its binding to the 30S ribosomal subunits. Also involved in the hydrolysis of GTP during the formation of the 70S ribosomal complex. The sequence is that of Translation initiation factor IF-2 from Pseudothermotoga lettingae (strain ATCC BAA-301 / DSM 14385 / NBRC 107922 / TMO) (Thermotoga lettingae).